The sequence spans 282 residues: Heterogeneous nuclear ribonucleoprotein C (282 aa).

An RRM domain is found at 17 to 88 (SRVFIGNLNT…QVLDINLAAE (72 aa)). Disordered regions lie at residues 131-177 (APPP…RLKG) and 208-282 (QSKQ…EEDS). Positions 141–147 (PSKRQRV) match the Nuclear localization signal motif. A compositionally biased stretch (low complexity) spans 161-172 (SKSGQRGGSSKS). Positions 177–217 (GDDLQAIKKELSQIKQRVDSLLENLERIERDQSKQDTKLDD) form a coiled coil. Composition is skewed to basic and acidic residues over residues 208–217 (QSKQDTKLDD) and 224–235 (LKKEETGVKLIE). 2 stretches are compositionally biased toward acidic residues: residues 236 to 257 (ETGD…EDTL) and 265 to 282 (KETE…EEDS).

Belongs to the RRM HNRPC family. RALY subfamily. In terms of assembly, tetramer.

Its subcellular location is the nucleus. In terms of biological role, binds pre-mRNA and nucleates the assembly of 40S hnRNP particles. Interacts with poly-U tracts in the 3'-UTR or 5'-UTR of mRNA and modulates the stability and the level of translation of bound mRNA molecules. Single HNRNPC tetramers bind 230-240 nucleotides. Trimers of HNRNPC tetramers bind 700 nucleotides. May play a role in the early steps of spliceosome assembly and pre-mRNA splicing. N6-methyladenosine (m6A) has been shown to alter the local structure in mRNAs and long non-coding RNAs (lncRNAs) via a mechanism named 'm(6)A-switch', facilitating binding of HNRNPC, leading to regulation of mRNA splicing. This is Heterogeneous nuclear ribonucleoprotein C (hnrnpc) from Xenopus laevis (African clawed frog).